The sequence spans 296 residues: Claudin-23 (296 aa).

At 1–2 (MR) the chain is on the cytoplasmic side. A helical transmembrane segment spans residues 3 to 23 (TPVVMTLGMVLTPCGLLLNLV). Residues 24-81 (STLAPGWRLVKGFLDQPVDVVLYQGLWDICREQSSRERECGQPDEWNYFQTQPVQVAR) lie on the Extracellular side of the membrane. A helical transmembrane segment spans residues 82–102 (GLMITSLATTALGLLLASLGV). The Cytoplasmic portion of the chain corresponds to 103 to 111 (RCWQDEPHY). A helical membrane pass occupies residues 112–132 (GLAGLSGVVFFVAGLFSLIPV). The Extracellular portion of the chain corresponds to 133 to 160 (SWYNHFLSDPDVLAAPSSPVTVQVSYSL). A helical membrane pass occupies residues 161–181 (VLGYLGSCLLLLGGFSLALSF). The Cytoplasmic segment spans residues 182–296 (APWCEERCRR…QNSLPCDSDL (115 aa)). The segment at 224–296 (YSDGQHRPPP…QNSLPCDSDL (73 aa)) is disordered. Positions 273-284 (TSQGGSSSRSTR) are enriched in low complexity. Polar residues predominate over residues 285–296 (PCQNSLPCDSDL).

The protein belongs to the claudin family.

It localises to the cell junction. The protein localises to the tight junction. It is found in the cell membrane. Its function is as follows. Plays a major role in tight junction-specific obliteration of the intercellular space, through calcium-independent cell-adhesion activity. The sequence is that of Claudin-23 (Cldn23) from Mus musculus (Mouse).